The following is a 317-amino-acid chain: Petrobactin-binding protein YclQ (317 aa).

Residues Met-1–Ala-19 form the signal peptide. Cys-20 carries the N-palmitoyl cysteine lipid modification. A lipid anchor (S-diacylglycerol cysteine) is attached at Cys-20. Positions Lys-56–Lys-317 constitute a Fe/B12 periplasmic-binding domain.

The protein belongs to the bacterial solute-binding protein 8 family. In terms of assembly, the complex is composed of two ATP-binding proteins (YclP), two transmembrane proteins (YclN and YclO) and a solute-binding protein (YclQ). Interacts with FloT.

Its subcellular location is the cell membrane. The protein resides in the membrane raft. In terms of biological role, part of the ABC transporter complex YclNOPQ involved in uptake of ferric-petrobactin. Petrobactin is a photoreactive 3,4-catecholate siderophore produced by many members of the B.cereus group, including B.anthracis. Binds selectively iron-free and ferric petrobactin and the petrobactin precursor 3,4-dihydroxybenzoic acid (3,4-DHB). This chain is Petrobactin-binding protein YclQ (yclQ), found in Bacillus subtilis (strain 168).